The following is a 107-amino-acid chain: UPF0145 protein TT_C0892 (107 aa).

The protein belongs to the UPF0145 family.

This chain is UPF0145 protein TT_C0892, found in Thermus thermophilus (strain ATCC BAA-163 / DSM 7039 / HB27).